Consider the following 380-residue polypeptide: Cytochrome b (380 aa).

4 helical membrane-spanning segments follow: residues 33–53 (FGSL…FLAM), 77–98 (WMIR…FLHI), 113–133 (WNIG…GYVL), and 178–198 (FFTL…LHLL). Residues H83 and H97 each coordinate heme b. H182 and H196 together coordinate heme b. An a ubiquinone-binding site is contributed by H201. The next 4 helical transmembrane spans lie at 226-246 (IKDI…TLLS), 288-308 (LGGV…PALH), 320-340 (LSQF…WIGG), and 347-367 (FITI…LLMP).

It belongs to the cytochrome b family. As to quaternary structure, the cytochrome bc1 complex contains 11 subunits: 3 respiratory subunits (MT-CYB, CYC1 and UQCRFS1), 2 core proteins (UQCRC1 and UQCRC2) and 6 low-molecular weight proteins (UQCRH/QCR6, UQCRB/QCR7, UQCRQ/QCR8, UQCR10/QCR9, UQCR11/QCR10 and a cleavage product of UQCRFS1). This cytochrome bc1 complex then forms a dimer. The cofactor is heme b.

Its subcellular location is the mitochondrion inner membrane. Component of the ubiquinol-cytochrome c reductase complex (complex III or cytochrome b-c1 complex) that is part of the mitochondrial respiratory chain. The b-c1 complex mediates electron transfer from ubiquinol to cytochrome c. Contributes to the generation of a proton gradient across the mitochondrial membrane that is then used for ATP synthesis. In Pongo pygmaeus (Bornean orangutan), this protein is Cytochrome b (MT-CYB).